The chain runs to 499 residues: Glycerol kinase (499 aa).

Residue Thr12 coordinates ADP. ATP contacts are provided by Thr12, Thr13, and Ser14. Residue Thr12 participates in sn-glycerol 3-phosphate binding. Arg16 lines the ADP pocket. Sn-glycerol 3-phosphate is bound by residues Arg82, Glu83, Tyr134, and Asp243. Glycerol is bound by residues Arg82, Glu83, Tyr134, Asp243, and Gln244. Residues Thr265 and Gly308 each contribute to the ADP site. ATP-binding residues include Thr265, Gly308, Gln312, and Gly409. Positions 409 and 413 each coordinate ADP.

The protein belongs to the FGGY kinase family. Homotetramer and homodimer (in equilibrium).

The catalysed reaction is glycerol + ATP = sn-glycerol 3-phosphate + ADP + H(+). It participates in polyol metabolism; glycerol degradation via glycerol kinase pathway; sn-glycerol 3-phosphate from glycerol: step 1/1. Its activity is regulated as follows. Activated by phosphorylation and inhibited by fructose 1,6-bisphosphate (FBP). Functionally, key enzyme in the regulation of glycerol uptake and metabolism. Catalyzes the phosphorylation of glycerol to yield sn-glycerol 3-phosphate. The polypeptide is Glycerol kinase (Lachnoclostridium phytofermentans (strain ATCC 700394 / DSM 18823 / ISDg) (Clostridium phytofermentans)).